A 423-amino-acid chain; its full sequence is Glutamyl-tRNA reductase (423 aa).

Substrate-binding positions include 49–52 (TCNR), Ser-107, 112–114 (EPQ), and Gln-118. Cys-50 acts as the Nucleophile in catalysis. NADP(+) is bound at residue 187–192 (GAGETI).

This sequence belongs to the glutamyl-tRNA reductase family. In terms of assembly, homodimer.

The enzyme catalyses (S)-4-amino-5-oxopentanoate + tRNA(Glu) + NADP(+) = L-glutamyl-tRNA(Glu) + NADPH + H(+). The protein operates within porphyrin-containing compound metabolism; protoporphyrin-IX biosynthesis; 5-aminolevulinate from L-glutamyl-tRNA(Glu): step 1/2. Functionally, catalyzes the NADPH-dependent reduction of glutamyl-tRNA(Glu) to glutamate 1-semialdehyde (GSA). This is Glutamyl-tRNA reductase from Pseudoalteromonas atlantica (strain T6c / ATCC BAA-1087).